We begin with the raw amino-acid sequence, 293 residues long: 3-hydroxybutyryl-CoA dehydrogenase (293 aa).

It belongs to the 3-hydroxyacyl-CoA dehydrogenase family.

It carries out the reaction (3S)-3-hydroxybutanoyl-CoA + NADP(+) = acetoacetyl-CoA + NADPH + H(+). It functions in the pathway lipid metabolism; butanoate metabolism. This chain is 3-hydroxybutyryl-CoA dehydrogenase (hbdA), found in Bradyrhizobium diazoefficiens (strain JCM 10833 / BCRC 13528 / IAM 13628 / NBRC 14792 / USDA 110).